Reading from the N-terminus, the 31-residue chain is DLFQFGKMIECANKGSRPSLDYMNYGCYCGK.

The protein belongs to the phospholipase A2 family. Group I subfamily. As to quaternary structure, heterotrimer of alpha, beta and gamma chains, each related to PLA2. In terms of tissue distribution, expressed by the venom gland.

It localises to the secreted. Its function is as follows. Heterotrimer: Snake venom phospholipase A2 (PLA2) that has presynaptic neurotoxicity. Inhibits nerve-evoked twitch contractions but not responses to cholinergic agonists acetylcholine and carbachol and to depolarizing agonist KCl. Causes a fade in tetanic contractions. Displays a triphasic mode of action with depression, enhancement and blockade of neurotransmission. Does not display myotoxic activity such as changes in baseline muscle tension or inhibition of directly stimulated muscle twitches. All subunits are necessary for maximum toxicity. In terms of biological role, monomer: The beta chain has no enzymatic activity and is not toxic by itself. This chain is Phospholipase A2 homolog P-elapitoxin-Aa1a beta chain, found in Acanthophis antarcticus (Common death adder).